Here is a 363-residue protein sequence, read N- to C-terminus: UDP-N-acetylglucosamine--N-acetylmuramyl-(pentapeptide) pyrophosphoryl-undecaprenol N-acetylglucosamine transferase (363 aa).

UDP-N-acetyl-alpha-D-glucosamine contacts are provided by residues 10–12 (TGG), asparagine 124, serine 195, and glutamine 295.

The protein belongs to the glycosyltransferase 28 family. MurG subfamily.

Its subcellular location is the cell membrane. The enzyme catalyses di-trans,octa-cis-undecaprenyl diphospho-N-acetyl-alpha-D-muramoyl-L-alanyl-D-glutamyl-meso-2,6-diaminopimeloyl-D-alanyl-D-alanine + UDP-N-acetyl-alpha-D-glucosamine = di-trans,octa-cis-undecaprenyl diphospho-[N-acetyl-alpha-D-glucosaminyl-(1-&gt;4)]-N-acetyl-alpha-D-muramoyl-L-alanyl-D-glutamyl-meso-2,6-diaminopimeloyl-D-alanyl-D-alanine + UDP + H(+). Its pathway is cell wall biogenesis; peptidoglycan biosynthesis. Its function is as follows. Cell wall formation. Catalyzes the transfer of a GlcNAc subunit on undecaprenyl-pyrophosphoryl-MurNAc-pentapeptide (lipid intermediate I) to form undecaprenyl-pyrophosphoryl-MurNAc-(pentapeptide)GlcNAc (lipid intermediate II). The protein is UDP-N-acetylglucosamine--N-acetylmuramyl-(pentapeptide) pyrophosphoryl-undecaprenol N-acetylglucosamine transferase of Bacillus subtilis (strain 168).